The sequence spans 200 residues: Methyl-coenzyme M reductase I operon protein C (200 aa).

In terms of assembly, MCR is composed of three subunits: alpha, beta, and gamma. The function of proteins C and D is not known.

This is Methyl-coenzyme M reductase I operon protein C (mcrC) from Methanocaldococcus jannaschii (strain ATCC 43067 / DSM 2661 / JAL-1 / JCM 10045 / NBRC 100440) (Methanococcus jannaschii).